A 495-amino-acid chain; its full sequence is Divinyl ether synthase CYP74M3 (495 aa).

Residue cysteine 446 participates in heme binding.

Belongs to the cytochrome P450 family. Heme serves as cofactor.

The enzyme catalyses (13S)-hydroperoxy-(9Z,11E)-octadecadienoate = etheroleate + H2O. It carries out the reaction (13S)-hydroperoxy-(9Z,11E,15Z)-octadecatrienoate = etherolenate + H2O. The protein operates within lipid metabolism; oxylipin biosynthesis. Its function is as follows. Divinyl ether synthase involved in oxylipin biosynthesis. Catalyzes the conversion of (13S)-hydroperoxy-(9Z,11E)-octadecadienoate (13-HPOD) to etheroleate and (13S)-hydroperoxy-(9Z,11E,15Z)-octadecatrienoate (13-HPOT) to etherolenate. Has no activity with the corresponding 9-hydroperoxides (9-HPOD and 9-HPOT). The protein is Divinyl ether synthase CYP74M3 of Selaginella moellendorffii (Spikemoss).